A 686-amino-acid chain; its full sequence is tRNA 5-methylaminomethyl-2-thiouridine biosynthesis bifunctional protein MnmC (686 aa).

Residues 1–258 (MPNIPLRVNS…RRALRRQQLD (258 aa)) form a tRNA (mnm(5)s(2)U34)-methyltransferase region. The FAD-dependent cmnm(5)s(2)U34 oxidoreductase stretch occupies residues 276–686 (IGGGVASANL…MRKLIKGKAL (411 aa)).

The protein in the N-terminal section; belongs to the methyltransferase superfamily. tRNA (mnm(5)s(2)U34)-methyltransferase family. This sequence in the C-terminal section; belongs to the DAO family. The cofactor is FAD.

It localises to the cytoplasm. The enzyme catalyses 5-aminomethyl-2-thiouridine(34) in tRNA + S-adenosyl-L-methionine = 5-methylaminomethyl-2-thiouridine(34) in tRNA + S-adenosyl-L-homocysteine + H(+). In terms of biological role, catalyzes the last two steps in the biosynthesis of 5-methylaminomethyl-2-thiouridine (mnm(5)s(2)U) at the wobble position (U34) in tRNA. Catalyzes the FAD-dependent demodification of cmnm(5)s(2)U34 to nm(5)s(2)U34, followed by the transfer of a methyl group from S-adenosyl-L-methionine to nm(5)s(2)U34, to form mnm(5)s(2)U34. This Shewanella loihica (strain ATCC BAA-1088 / PV-4) protein is tRNA 5-methylaminomethyl-2-thiouridine biosynthesis bifunctional protein MnmC.